A 465-amino-acid chain; its full sequence is Ras-like GTPase YcjX (465 aa).

The Walker A motif motif lies at 26 to 33 (GLSRSGKT). 8 residues coordinate GTP: Ser-28, Gly-31, Lys-32, Thr-33, Ala-34, Trp-95, Thr-99, and Arg-100. GDP is bound by residues Gly-31, Lys-32, Thr-33, Ala-34, Trp-95, and Thr-99. Residue Lys-249 is modified to N6-acetyllysine. Lys-338, Asp-340, His-341, and Val-380 together coordinate GTP. The GDP site is built by Lys-338, Asp-340, His-341, and Val-380.

The protein to H.influenzae HI_1637. As to quaternary structure, monomer in solution. Mg(2+) is required as a cofactor.

It carries out the reaction GTP + H2O = GDP + phosphate + H(+). Its activity is regulated as follows. Alternates between an inactive form bound to GDP and an active form bound to GTP. Likely activated by a guanine nucleotide-exchange factor (GEF). In terms of biological role, binds GTP and GDP. Has intrinsic GTPase activity. Does not hydrolyze ATP. May act as a transducer of stress responses. This chain is Ras-like GTPase YcjX (ycjX), found in Escherichia coli (strain K12).